Here is a 208-residue protein sequence, read N- to C-terminus: Ras-related protein Rab-6B (208 aa).

GTP-binding positions include 20–27 (GEQSVGKT), Thr-45, 68–72 (DTAGQ), and 126–129 (NKTD). The Effector region signature appears at 42–50 (YQATIGIDF). Residues Cys-206 and Cys-208 are each lipidated (S-geranylgeranyl cysteine). A Cysteine methyl ester modification is found at Cys-208.

This sequence belongs to the small GTPase superfamily. Rab family. As to quaternary structure, interacts (GTP-bound) with BICD1 (via C-terminus); the interaction is direct. Interacts (GDP-bound) with DYNLRB1. Interacts (GTP-bound) with APBA1/MINT1. Interacts (GTP-bound) with VPS13B.

It is found in the golgi apparatus membrane. The protein localises to the endoplasmic reticulum-Golgi intermediate compartment. It localises to the cytoplasmic vesicle. It carries out the reaction GTP + H2O = GDP + phosphate + H(+). Its activity is regulated as follows. Regulated by guanine nucleotide exchange factors (GEFs) which promote the exchange of bound GDP for free GTP, GTPase activating proteins (GAPs) which increase the GTP hydrolysis activity, and GDP dissociation inhibitors which inhibit the dissociation of the nucleotide from the GTPase. The small GTPases Rab are key regulators of intracellular membrane trafficking, from the formation of transport vesicles to their fusion with membranes. Rabs cycle between active GTP-bound and inactive GDP-bound states. In their active state, drive transport of vesicular carriers from donor organelles to acceptor organelles to regulate the membrane traffic that maintains organelle identity and morphology. Recruits VPS13B to the Golgi membrane. Regulates the compacted morphology of the Golgi. Seems to have a role in retrograde membrane traffic at the level of the Golgi complex. May function in retrograde transport in neuronal cells. Plays a role in neuron projection development. This is Ras-related protein Rab-6B (RAB6B) from Bos taurus (Bovine).